Here is a 146-residue protein sequence, read N- to C-terminus: Protein archease (146 aa).

Ca(2+) contacts are provided by Asp16, Asp145, and Ile146.

It belongs to the archease family.

Functionally, activates the tRNA-splicing ligase complex by facilitating the enzymatic turnover of catalytic subunit RtcB. Acts by promoting the guanylylation of RtcB, a key intermediate step in tRNA ligation. Can also alter the NTP specificity of RtcB such that ATP, dGTP or ITP is used efficiently. This chain is Protein archease, found in Methanosarcina barkeri (strain Fusaro / DSM 804).